The primary structure comprises 474 residues: Synaptotagmin-17 (474 aa).

The interval 60-117 (WLMASRSNDKDGDSVHTASDVPLTPRTNSPDGRRSSSDTSKSTYSLTRRISSLDSRRP) is disordered. Positions 96–117 (SDTSKSTYSLTRRISSLDSRRP) are enriched in low complexity. Residues Ser-118 and Ser-119 each carry the phosphoserine modification. 2 C2 domains span residues 184–310 (QLGM…HWWK) and 321–455 (ELGE…EQWH).

The protein belongs to the synaptotagmin family. Expressed in brain and kidney.

The protein localises to the membrane. Functionally, plays a role in dendrite formation by melanocytes. The chain is Synaptotagmin-17 (Syt17) from Rattus norvegicus (Rat).